Here is an 865-residue protein sequence, read N- to C-terminus: Catenin alpha-2 (865 aa).

Basic and acidic residues predominate over residues 823 to 839 (PEKKPLVKREKPEECQT). A disordered region spans residues 823 to 851 (PEKKPLVKREKPEECQTRVRRGSQKKHIS). Over residues 840 to 850 (RVRRGSQKKHI) the composition is skewed to basic residues.

It belongs to the vinculin/alpha-catenin family.

The protein resides in the cell membrane. Its subcellular location is the cytoplasm. It localises to the cytoskeleton. The protein localises to the cell junction. It is found in the adherens junction. The protein resides in the cell projection. Its subcellular location is the axon. It localises to the nucleus. Its function is as follows. May function as a linker between cadherin adhesion receptors and the cytoskeleton to regulate cell-cell adhesion and differentiation in the nervous system. This is Catenin alpha-2 (Ctnna2) from Danio rerio (Zebrafish).